We begin with the raw amino-acid sequence, 1402 residues long: Transcription factor SPT20 homolog (1402 aa).

7 disordered regions span residues 1 to 29 (MNGNSKVHTEENKNEHQQEGKGGEQEQEQ), 60 to 107 (VNSL…LDTD), 114 to 133 (NNDSSNNTTTTTIPRQSSSS), 177 to 206 (QTTLPTNNNNNNNNNNNNNNNNNNNNNNIL), 786 to 817 (APSTSTSSSSSSGGTTTTTTATGTTPTTPTPV), 1136 to 1174 (PQQIQTQPLQQPPNQMAQSMISPQSTPSTSPSPQQQYQT), and 1199 to 1250 (QPLQ…PPQI). The span at 7–29 (VHTEENKNEHQQEGKGGEQEQEQ) shows a compositional bias: basic and acidic residues. The segment covering 60–72 (VNSLSEPTPNEQQ) has biased composition (polar residues). Low complexity predominate over residues 73-102 (NNNNNNNSNGNGNGNDETTSSKTTTIINSN). 6 stretches are compositionally biased toward low complexity: residues 183–204 (NNNNNNNNNNNNNNNNNNNNNN), 786–812 (APSTSTSSSSSSGGTTTTTTATGTTPT), 1136–1150 (PQQIQTQPLQQPPNQ), 1157–1174 (SPQSTPSTSPSPQQQYQT), 1199–1218 (QPLQQPQPQPQQQQQQQQQQ), and 1226–1250 (PQQFAQHLQQQQMQRPQAQLQPPQI).

Belongs to the SPT20 family.

This chain is Transcription factor SPT20 homolog, found in Dictyostelium discoideum (Social amoeba).